A 109-amino-acid chain; its full sequence is FK506-binding protein (109 aa).

In terms of domain architecture, PPIase FKBP-type spans 20-108; it reads GKEITVHYTG…IFEVELLKVY (89 aa).

This sequence belongs to the FKBP-type PPIase family.

The enzyme catalyses [protein]-peptidylproline (omega=180) = [protein]-peptidylproline (omega=0). Inhibited by FK506. Functionally, PPIases accelerate the folding of proteins. The polypeptide is FK506-binding protein (fbp) (Neisseria meningitidis serogroup A / serotype 4A (strain DSM 15465 / Z2491)).